A 595-amino-acid polypeptide reads, in one-letter code: Aspartate--tRNA(Asp/Asn) ligase (595 aa).

Residue Glu175 participates in L-aspartate binding. The interval 199 to 202 is aspartate; it reads QQYK. The L-aspartate site is built by Arg221 and His454. ATP is bound at residue 221 to 223; it reads RDE. Glu488 is an ATP binding site. Arg495 provides a ligand contact to L-aspartate. ATP is bound at residue 540-543; it reads GIDR.

Belongs to the class-II aminoacyl-tRNA synthetase family. Type 1 subfamily. In terms of assembly, homodimer.

The protein resides in the cytoplasm. It catalyses the reaction tRNA(Asx) + L-aspartate + ATP = L-aspartyl-tRNA(Asx) + AMP + diphosphate. In terms of biological role, aspartyl-tRNA synthetase with relaxed tRNA specificity since it is able to aspartylate not only its cognate tRNA(Asp) but also tRNA(Asn). Reaction proceeds in two steps: L-aspartate is first activated by ATP to form Asp-AMP and then transferred to the acceptor end of tRNA(Asp/Asn). The polypeptide is Aspartate--tRNA(Asp/Asn) ligase (Sinorhizobium fredii (strain NBRC 101917 / NGR234)).